A 187-amino-acid chain; its full sequence is Casparian strip membrane protein 1 (187 aa).

Residues 1 to 10 (MKGSSEHGET) show a composition bias toward basic and acidic residues. Positions 1–20 (MKGSSEHGETSKQAPLGSSR) are disordered. Over 1–27 (MKGSSEHGETSKQAPLGSSRGVSKGVS) the chain is Cytoplasmic. The chain crosses the membrane as a helical span at residues 28–48 (VLDLILRFIAIIGTLASAIAM). The Extracellular segment spans residues 49–75 (GTTNETLPFFTQFIRFKAQYSDLPTLT). N-linked (GlcNAc...) asparagine glycosylation occurs at N52. A helical transmembrane segment spans residues 76–96 (FFVVANSIVCAYLTLSLPLSI). The Cytoplasmic segment spans residues 97–115 (VHIIRSRAKYSRLLLVVLD). The chain crosses the membrane as a helical span at residues 116 to 136 (AAMLALVTPGASAAAAIVYLA). Residues 137 to 162 (HKGNVRANWLAICQQFDSFCERISGC) are Extracellular-facing. A helical membrane pass occupies residues 163 to 183 (LIGSFGAMVMLVLLLLLSAIA). At 184–187 (LARR) the chain is on the cytoplasmic side.

This sequence belongs to the Casparian strip membrane proteins (CASP) family. Homodimer and heterodimers.

The protein resides in the cell membrane. In terms of biological role, regulates membrane-cell wall junctions and localized cell wall deposition. Required for establishment of the Casparian strip membrane domain (CSD) and the subsequent formation of Casparian strips, a cell wall modification of the root endodermis that determines an apoplastic barrier between the intraorganismal apoplasm and the extraorganismal apoplasm and prevents lateral diffusion. The sequence is that of Casparian strip membrane protein 1 from Zea mays (Maize).